The primary structure comprises 299 residues: MLKSSKKEDSSKKNQNNKLIFTVRKLFSPIKNFFRKTKTPDNFFGVIKRLKINSQKMTLDERNILANLLELEYKTIEDIMVPRSDIAAIKLTTNLEELSESIKLEVPHTRTLIYDGTLDNVVGFIHIKDLFKALATKQNGRLKKLIRKHIIAAPSMKLLDLLAKMRRERTHIAIVVDEYGGTDGLVTIEDLIEEIVGRIDDEHDQQLDSDNFKVINNSTIISNARVEVEVLEEIIGEKLQNDDDEFDTIGGLVLTRVSSVPAIGTRIDISENIEIEVTDATPRSLKQVKIRLKNGLNGK.

CBS domains are found at residues methionine 80 to leucine 142 and leucine 145 to glutamate 202.

The protein belongs to the UPF0053 family. Hemolysin C subfamily.

The chain is Hemolysin C homolog (tlyC) from Rickettsia massiliae (strain Mtu5).